The chain runs to 182 residues: UPF0398 protein RBAM_020340 (182 aa).

Belongs to the UPF0398 family.

The chain is UPF0398 protein RBAM_020340 from Bacillus velezensis (strain DSM 23117 / BGSC 10A6 / LMG 26770 / FZB42) (Bacillus amyloliquefaciens subsp. plantarum).